A 522-amino-acid polypeptide reads, in one-letter code: Hydroxymethylglutaryl-CoA synthase, cytoplasmic (522 aa).

Residues Asp43 and Ala44 each contribute to the (3S)-3-hydroxy-3-methylglutaryl-CoA site. Glu95 acts as the Proton donor/acceptor in catalysis. (3S)-3-hydroxy-3-methylglutaryl-CoA contacts are provided by Cys129, Asn167, Thr171, Ser221, His264, Lys273, Asn344, and Ser378. Residue Cys129 is the Acyl-thioester intermediate of the active site. His264 acts as the Proton donor/acceptor in catalysis.

Belongs to the thiolase-like superfamily. HMG-CoA synthase family. Homodimer.

It is found in the cytoplasm. It carries out the reaction acetoacetyl-CoA + acetyl-CoA + H2O = (3S)-3-hydroxy-3-methylglutaryl-CoA + CoA + H(+). Its pathway is metabolic intermediate biosynthesis; (R)-mevalonate biosynthesis; (R)-mevalonate from acetyl-CoA: step 2/3. Its function is as follows. Catalyzes the condensation of acetyl-CoA with acetoacetyl-CoA to form HMG-CoA, which is converted by HMG-CoA reductase (HMGCR) into mevalonate, a precursor for cholesterol synthesis. The polypeptide is Hydroxymethylglutaryl-CoA synthase, cytoplasmic (HMGCS1) (Gallus gallus (Chicken)).